Reading from the N-terminus, the 909-residue chain is Glucan endo-1,3-beta-D-glucosidase ARB_01444 (909 aa).

The N-terminal stretch at M1–A23 is a signal peptide. The tract at residues K136 to T187 is disordered. Over residues Y155–Q180 the composition is skewed to polar residues. N159, N239, and N259 each carry an N-linked (GlcNAc...) asparagine glycan. The segment at Q191–P430 is beta-sandwich subdomain. In terms of domain architecture, GH81 spans Q191 to L909. Positions S431–N524 are alpha/beta subdomain. Residues S539–L909 form a (alpha/beta)6 barrel subdomain region. The active site involves D654. Residues H658, D727, E729, and E733 each coordinate (1,3-beta-D-glucosyl)n. Catalysis depends on residues E729 and E733. The tract at residues K798–D800 is may provide specificity for triple-helical beta-glucan. Y811 lines the (1,3-beta-D-glucosyl)n pocket.

Belongs to the glycosyl hydrolase 81 family.

The protein localises to the secreted. It is found in the cell wall. The catalysed reaction is Hydrolysis of (1-&gt;3)-beta-D-glucosidic linkages in (1-&gt;3)-beta-D-glucans.. In terms of biological role, cleaves internal linkages in 1,3-beta-glucan. Probably involved in cell separation after cytokinesis. This chain is Glucan endo-1,3-beta-D-glucosidase ARB_01444, found in Arthroderma benhamiae (strain ATCC MYA-4681 / CBS 112371) (Trichophyton mentagrophytes).